A 372-amino-acid polypeptide reads, in one-letter code: Putative F-box/kelch-repeat protein At3g22730 (372 aa).

In terms of domain architecture, F-box spans 1 to 50 (MMMSDLSLDLVEEILSRVPATSLKRLRSTCKLWNALFKNPGFTKKQFLKA). Kelch repeat units follow at residues 155 to 204 (ILRC…SFKG), 245 to 293 (ALSV…PIRG), and 324 to 372 (KVYI…IIKE).

This is Putative F-box/kelch-repeat protein At3g22730 from Arabidopsis thaliana (Mouse-ear cress).